The chain runs to 366 residues: E3 ubiquitin-protein ligase SINA-like 1 (366 aa).

The disordered stretch occupies residues 1–37; the sequence is MVKGTNAEQALAREEASSSRPKRQRVPSIVEEEGENG. The segment at 56-92 adopts an RING-type; degenerate zinc-finger fold; the sequence is CPICCNALTIPIFQCDKGHIACSSCCTNVSNKCPYCS. The tract at residues 106–354 is SBD; it reads VVEAFIVRCP…KGTYICIRSL (249 aa). The segment at 109–232 adopts an SIAH-type; degenerate zinc-finger fold; it reads AFIVRCPIVA…LYSHYAANHK (124 aa). Cysteine 114, cysteine 186, histidine 198, cysteine 202, cysteine 209, cysteine 214, histidine 226, and histidine 231 together coordinate Zn(2+).

This sequence belongs to the SINA (Seven in absentia) family.

It carries out the reaction S-ubiquitinyl-[E2 ubiquitin-conjugating enzyme]-L-cysteine + [acceptor protein]-L-lysine = [E2 ubiquitin-conjugating enzyme]-L-cysteine + N(6)-ubiquitinyl-[acceptor protein]-L-lysine.. The protein operates within protein modification; protein ubiquitination. Functionally, E3 ubiquitin-protein ligase that mediates ubiquitination and subsequent proteasomal degradation of target proteins. E3 ubiquitin ligases accept ubiquitin from an E2 ubiquitin-conjugating enzyme in the form of a thioester and then directly transfers the ubiquitin to targeted substrates. It probably triggers the ubiquitin-mediated degradation of different substrates. The chain is E3 ubiquitin-protein ligase SINA-like 1 from Arabidopsis thaliana (Mouse-ear cress).